The sequence spans 358 residues: DNA replication and repair protein RecF (358 aa).

30-37 (GNNGSGKT) contributes to the ATP binding site.

It belongs to the RecF family.

It localises to the cytoplasm. The RecF protein is involved in DNA metabolism; it is required for DNA replication and normal SOS inducibility. RecF binds preferentially to single-stranded, linear DNA. It also seems to bind ATP. The polypeptide is DNA replication and repair protein RecF (Histophilus somni (strain 129Pt) (Haemophilus somnus)).